The chain runs to 579 residues: Putative fatty-acid--CoA ligase fadD21 (579 aa).

It belongs to the ATP-dependent AMP-binding enzyme family.

The chain is Putative fatty-acid--CoA ligase fadD21 (fadD21) from Mycobacterium leprae (strain TN).